A 201-amino-acid polypeptide reads, in one-letter code: Small ribosomal subunit protein uS4c (201 aa).

The segment at 15–44 (LGALPGLTSKRPKTGNDLKNQSRSGKKSQY) is disordered. One can recognise an S4 RNA-binding domain in the interval 89-150 (MRLDNILFRL…EKKSRTLIQN (62 aa)).

The protein belongs to the universal ribosomal protein uS4 family. Part of the 30S ribosomal subunit. Contacts protein S5. The interaction surface between S4 and S5 is involved in control of translational fidelity.

The protein resides in the plastid. It localises to the chloroplast. In terms of biological role, one of the primary rRNA binding proteins, it binds directly to 16S rRNA where it nucleates assembly of the body of the 30S subunit. Functionally, with S5 and S12 plays an important role in translational accuracy. This is Small ribosomal subunit protein uS4c (rps4) from Cucumis sativus (Cucumber).